Here is a 733-residue protein sequence, read N- to C-terminus: MGNWMPGWSSSGSLGVPPMPVQKLEKSVQVNLEPDEKCLSQTEVSSVPSQKLEEYIQANLKPDEESLKQIDQAVDAISDLLCSEVMIDVLKVVKGGSYGRKTVLRDCSDGTLVLFTGLFKQFQDQKKYQDKLLDLIEQRLKSHEKYKKSVKRKLSLLEVQVSIPGQSILLQLLPTFNPLCISENPSAQVYQNLKRSMDQVKASPGEFSDCFTTLQQRFFEKYPGRLKDLILLVKHWYKQLQDKWIIPSPPPLLYALELLTVYAWEQGCQTKDFDITQGIRTVLQLISQPTNLCVYWLDNYNFEDETVRNNLLHQLNSPRPVILDPTDPTNNVGKDDRFWQLLAEEAQEWLNSLRLNKPHKPCWDVLPMPFFITPSHCLDKFIKDFLQPDKVFLNQIKRAVDIICSFLKETCFQNSDIKVLKIIKGGSTAKGTALQQRSDADIIVFLSSLDSYDSLETERSQYVQEIRKQLEACQKAFNLGVKFDISKWMAPRVLSFTLESKSLKQSVEFDVLPAYDALGQLRSDYTSRLKAYKKLIELYASQDSLKGGEFSVCFTELQRDFIETRPTKLKGLIRLIKHWYKQCERKMKPKASLPPKYALELLTVYAWEHGSGTDGFDTAEGFRTVLDLVIRYRQLCVFWTVNYNFEEDHMRKFLLTQIQKKRPVILDPADPTGDVGGGDRWCWHLLAKEAKEWLSSSCFQVEPKSPVQPWKVPVVQTPGSCGAQIYPVVGGVY.

The N-myristoyl glycine moiety is linked to residue Gly-2. 2 OAS domain regions span residues 47 to 365 (VPSQ…CWDV) and 373 to 713 (TPSH…WKVP). Lys-408 is modified (N6-acetyllysine). Residue Ser-427 participates in ATP binding. Residues Asp-439, Asp-441, and Asp-510 each contribute to the Mg(2+) site. ATP is bound by residues Arg-574 and Lys-577.

It belongs to the 2-5A synthase family. As to quaternary structure, homodimer. Requires Mg(2+) as cofactor. In terms of processing, myristoylation is not essential for its activity. Glycosylated. Glycosylation is essential for its activity.

Its subcellular location is the cytoplasm. It is found in the perinuclear region. It catalyses the reaction 3 ATP = 5'-triphosphoadenylyl-(2'-&gt;5')-adenylyl-(2'-&gt;5')-adenosine + 2 diphosphate. Produced as a latent enzyme which is activated by double stranded RNA (dsRNA) generated during the course of viral infection. The dsRNA activator must be at least 15 nucleotides long, and no modification of the 2'-hydroxyl group is tolerated. ssRNA or dsDNA do not act as activators. Strongly inhibited by copper, iron and zinc ions. Partially inhibited by cobalt and nickel ions. Functionally, interferon-induced, dsRNA-activated antiviral enzyme which plays a critical role in cellular innate antiviral response. Activated by detection of double stranded RNA (dsRNA): polymerizes higher oligomers of 2'-5'-oligoadenylates (2-5A) from ATP which then bind to the inactive monomeric form of ribonuclease L (RNASEL) leading to its dimerization and subsequent activation. Activation of RNASEL leads to degradation of cellular as well as viral RNA, resulting in the inhibition of protein synthesis, thus terminating viral replication. Can mediate the antiviral effect via the classical RNASEL-dependent pathway or an alternative antiviral pathway independent of RNASEL. In addition, it may also play a role in other cellular processes such as apoptosis, cell growth, differentiation and gene regulation. May act as a negative regulator of lactation, stopping lactation in virally infected mammary gland lobules, thereby preventing transmission of viruses to neonates. Non-infected lobules would not be affected, allowing efficient pup feeding during infection. In Rattus norvegicus (Rat), this protein is 2'-5'-oligoadenylate synthase 2 (Oas2).